A 1098-amino-acid chain; its full sequence is Probable DNA-directed RNA polymerase (1098 aa).

The span at 1–24 (PIRESVRVSTDRDPDLEDEKREQL) shows a compositional bias: basic and acidic residues. Positions 1–26 (PIRESVRVSTDRDPDLEDEKREQLGE) are disordered. Catalysis depends on residues D663, K750, and D915.

This sequence belongs to the phage and mitochondrial RNA polymerase family.

Its subcellular location is the mitochondrion. The enzyme catalyses RNA(n) + a ribonucleoside 5'-triphosphate = RNA(n+1) + diphosphate. Its function is as follows. DNA-dependent RNA polymerase catalyzes the transcription of DNA into RNA using the four ribonucleoside triphosphates as substrates. This Zea mays (Maize) protein is Probable DNA-directed RNA polymerase.